The sequence spans 296 residues: UDP-N-acetylenolpyruvoylglucosamine reductase (296 aa).

The region spanning 26-191 (RIGGPANYFK…LSATFRLSRN (166 aa)) is the FAD-binding PCMH-type domain. Residue R170 is part of the active site. Residue C218 is the Proton donor of the active site. The active site involves E287.

The protein belongs to the MurB family. It depends on FAD as a cofactor.

Its subcellular location is the cytoplasm. The catalysed reaction is UDP-N-acetyl-alpha-D-muramate + NADP(+) = UDP-N-acetyl-3-O-(1-carboxyvinyl)-alpha-D-glucosamine + NADPH + H(+). It participates in cell wall biogenesis; peptidoglycan biosynthesis. Functionally, cell wall formation. The polypeptide is UDP-N-acetylenolpyruvoylglucosamine reductase (Chlamydia abortus (strain DSM 27085 / S26/3) (Chlamydophila abortus)).